The sequence spans 589 residues: Kelch-like protein 25 (589 aa).

Residues 46–114 (TDVTLWAGDR…AYSSRIAINE (69 aa)) enclose the BTB domain. The region spanning 149–250 (CLGMMLLSDA…LPSDCLQEAV (102 aa)) is the BACK domain. 6 Kelch repeats span residues 296–340 (TLLI…AIGC), 341–388 (KVYV…ELEN), 389–444 (CLYV…SAKL), 446–492 (LFVF…VLGS), 494–538 (IFIM…ASGN), and 539–585 (KLYV…STWK).

Component of the BCR(KLHL25) E3 ubiquitin ligase complex, at least composed of CUL3, KLHL25 and RBX1.

It functions in the pathway protein modification; protein ubiquitination. Its function is as follows. Substrate-specific adapter of a BCR (BTB-CUL3-RBX1) E3 ubiquitin ligase complex involved in various processes, such as translation homeostasis and lipid synthesis. The BCR(KLHL25) ubiquitin ligase complex acts by mediating ubiquitination of hypophosphorylated EIF4EBP1 (4E-BP1): ubiquitination and subsequent degradation of hypophosphorylated EIF4EBP1 (4E-BP1) probably serves as a homeostatic mechanism to maintain translation and prevent eIF4E inhibition when eIF4E levels are low. The BCR(KLHL25) complex does not target EIF4EBP1 (4E-BP1) when it is hyperphosphorylated or associated with eIF4E. The BCR(KLHL25) complex also acts as a regulator of lipid synthesis by mediating ubiquitination and degradation of ACLY, thereby inhibiting lipid synthesis. BCR(KLHL25)-mediated degradation of ACLY promotes fatty acid oxidation and is required for differentiation of inducible regulatory T (iTreg) cells. The chain is Kelch-like protein 25 from Homo sapiens (Human).